The primary structure comprises 309 residues: uncharacterized protein (309 aa).

The protein to S.pombe SpAC14C4.04.

This is an uncharacterized protein from Schizosaccharomyces pombe (strain 972 / ATCC 24843) (Fission yeast).